The following is a 242-amino-acid chain: Uridylate kinase (242 aa).

15 to 18 (KLSG) is an ATP binding site. The interval 23 to 28 (GDEGFG) is involved in allosteric activation by GTP. UMP is bound at residue glycine 57. Residues glycine 58 and arginine 62 each contribute to the ATP site. Residues aspartate 77 and 138–145 (TGNPFCTT) each bind UMP. 3 residues coordinate ATP: threonine 165, tyrosine 171, and aspartate 174.

This sequence belongs to the UMP kinase family. In terms of assembly, homohexamer.

The protein resides in the cytoplasm. The catalysed reaction is UMP + ATP = UDP + ADP. Its pathway is pyrimidine metabolism; CTP biosynthesis via de novo pathway; UDP from UMP (UMPK route): step 1/1. With respect to regulation, allosterically activated by GTP. Inhibited by UTP. Functionally, catalyzes the reversible phosphorylation of UMP to UDP. The polypeptide is Uridylate kinase (Shewanella sp. (strain MR-4)).